The primary structure comprises 173 residues: dCTP deaminase, dUMP-forming (173 aa).

DCTP is bound by residues 93–98, Asp-111, 119–121, Gln-138, and Tyr-151; these read RSSIGR and TLE. The active-site Proton donor/acceptor is Glu-121.

Belongs to the dCTP deaminase family. In terms of assembly, homotrimer.

It carries out the reaction dCTP + 2 H2O = dUMP + NH4(+) + diphosphate. The protein operates within pyrimidine metabolism; dUMP biosynthesis; dUMP from dCTP: step 1/1. In terms of biological role, bifunctional enzyme that catalyzes both the deamination of dCTP to dUTP and the hydrolysis of dUTP to dUMP without releasing the toxic dUTP intermediate. This chain is dCTP deaminase, dUMP-forming, found in Clostridium acetobutylicum (strain ATCC 824 / DSM 792 / JCM 1419 / IAM 19013 / LMG 5710 / NBRC 13948 / NRRL B-527 / VKM B-1787 / 2291 / W).